Here is a 370-residue protein sequence, read N- to C-terminus: E3 ubiquitin-protein ligase E3D (370 aa).

Ala-2 bears the N-acetylalanine mark. Residues 129-159 carry the BRAT1-like motif motif; it reads PLPSENWSALVGEWCCHPDPFANKPLHPREN. Cys-144 is a binding site for Zn(2+). An interaction with UBE2C region spans residues 214 to 236; the sequence is QPSEGSFPNIPRSQFVQSVIARC. An HECT-like region spans residues 332–368; the sequence is LPSTTCLELLLILSRNNASLPLSLRQMNSFQLWCSHC.

In terms of assembly, interacts with UBE2C/UbcH10 (E2 ubiquitin-conjugating enzyme). In vitro, interacts with cyclin-B. Post-translationally, ubiquitinated by UBCH10 (E2 ubiquitin-conjugating enzyme).

It localises to the cytoplasm. The catalysed reaction is S-ubiquitinyl-[E2 ubiquitin-conjugating enzyme]-L-cysteine + [acceptor protein]-L-lysine = [E2 ubiquitin-conjugating enzyme]-L-cysteine + N(6)-ubiquitinyl-[acceptor protein]-L-lysine.. It participates in protein modification; protein ubiquitination. In terms of biological role, E3 ubiquitin-protein ligase which accepts ubiquitin from specific E2 ubiquitin-conjugating enzymes, and transfers it to substrates, generally promoting their degradation by the proteasome. Independently of its E3 ubiquitin-protein ligase activity, acts as an inhibitor of CPSF3 endonuclease activity by blocking CPSF3 active site. This chain is E3 ubiquitin-protein ligase E3D (Ube3d), found in Rattus norvegicus (Rat).